Reading from the N-terminus, the 242-residue chain is ATP synthase subunit a (242 aa).

The next 6 helical transmembrane spans lie at 29–49, 83–103, 114–134, 140–160, 181–201, and 206–226; these read SAVA…IAFV, VFFP…IIGM, IIVT…YGIY, FFSL…MVII, VAGH…TWFF, and IALV…QAYI.

This sequence belongs to the ATPase A chain family. In terms of assembly, F-type ATPases have 2 components, CF(1) - the catalytic core - and CF(0) - the membrane proton channel. CF(1) has five subunits: alpha(3), beta(3), gamma(1), delta(1), epsilon(1). CF(0) has three main subunits: a(1), b(2) and c(9-12). The alpha and beta chains form an alternating ring which encloses part of the gamma chain. CF(1) is attached to CF(0) by a central stalk formed by the gamma and epsilon chains, while a peripheral stalk is formed by the delta and b chains.

Its subcellular location is the cell inner membrane. In terms of biological role, key component of the proton channel; it plays a direct role in the translocation of protons across the membrane. The protein is ATP synthase subunit a of Orientia tsutsugamushi (strain Boryong) (Rickettsia tsutsugamushi).